A 747-amino-acid chain; its full sequence is MSQVKSSYSYDAPSDFINFSSLDDEGDTQNIDSWFEEKANLENKLLGKNGTGGLFQGKTPLRKANLQQAIVTPLKPVDNTYYKEAEKENLVEQSIPSNACSSLEVEAAISRKTPAQPQRRSLRLSAQKDLEQKEKHHVKMKAKRCATPVIIDEILPSKKMKVSNNKKKPEEEGSAHQDTAEKNASSPEKAKGRHTVPCMPPAKQKFLKSTEEQELEKSMKMQQEVVEMRKKNEEFKKLALAGIGQPVKKSVSQVTKSVDFHFRTDERIKQHPKNQEEYKEVNFTSELRKHPSSPARVTKGCTIVKPFNLSQGKKRTFDETVSTYVPLAQQVEDFHKRTPNRYHLRSKKDDINLLPSKSSVTKICRDPQTPVLQTKHRARAVTCKSTAELEAEELEKLQQYKFKARELDPRILEGGPILPKKPPVKPPTEPIGFDLEIEKRIQERESKKKTEDEHFEFHSRPCPTKILEDVVGVPEKKVLPITVPKSPAFALKNRIRMPTKEDEEEDEPVVIKAQPVPHYGVPFKPQIPEARTVEICPFSFDSRDKERQLQKEKKIKELQKGEVPKFKALPLPHFDTINLPEKKVKNVTQIEPFCLETDRRGALKAQTWKHQLEEELRQQKEAACFKARPNTVISQEPFVPKKEKKSVAEGLSGSLVQEPFQLATEKRAKERQELEKRMAEVEAQKAQQLEEARLQEEEQKKEELARLRRELVHKANPIRKYQGLEIKSSDQPLTVPVSPKFSTRFHC.

Phosphothreonine occurs at positions 59 and 72. A disordered region spans residues 110–143 (SRKTPAQPQRRSLRLSAQKDLEQKEKHHVKMKAK). A phosphoserine mark is found at serine 121 and serine 125. At lysine 128 the chain carries N6-acetyllysine. Threonine 147 bears the Phosphothreonine mark. The disordered stretch occupies residues 156–202 (PSKKMKVSNNKKKPEEEGSAHQDTAEKNASSPEKAKGRHTVPCMPPA). The span at 167–181 (KKPEEEGSAHQDTAE) shows a compositional bias: basic and acidic residues. A phosphoserine mark is found at serine 257, serine 292, and serine 293. At lysine 305 the chain carries N6-acetyllysine. Phosphoserine is present on serine 310. At threonine 338 the chain carries Phosphothreonine. Serine 359 carries the post-translational modification Phosphoserine. Threonine 369 carries the phosphothreonine modification. Lysine 375 bears the N6-acetyllysine mark. Lysine 477 is covalently cross-linked (Glycyl lysine isopeptide (Lys-Gly) (interchain with G-Cter in SUMO2)). A Phosphoserine modification is found at serine 486. Residue threonine 499 is modified to Phosphothreonine. Residues lysine 500 and lysine 641 each participate in a glycyl lysine isopeptide (Lys-Gly) (interchain with G-Cter in SUMO2) cross-link. Serine 738 bears the Phosphoserine mark. Lysine 740 is covalently cross-linked (Glycyl lysine isopeptide (Lys-Gly) (interchain with G-Cter in SUMO2)).

This sequence belongs to the TPX2 family. As to quaternary structure, interacts with AURKA. Interacts with importin-alpha; leading to inactivate TPX2. Interacts with HNRNPU; this interaction recruits HNRNPU to spindle microtubules (MTs). Interacts with BCL2L10. Interacts with KIF11. As to expression, expressed in lung carcinoma cell lines but not in normal lung tissues.

The protein resides in the nucleus. It is found in the cytoplasm. It localises to the cytoskeleton. Its subcellular location is the spindle. The protein localises to the spindle pole. Its function is as follows. Spindle assembly factor required for normal assembly of mitotic spindles. Required for normal assembly of microtubules during apoptosis. Required for chromatin and/or kinetochore dependent microtubule nucleation. Mediates AURKA localization to spindle microtubules. Activates AURKA by promoting its autophosphorylation at 'Thr-288' and protects this residue against dephosphorylation. TPX2 is inactivated upon binding to importin-alpha. At the onset of mitosis, GOLGA2 interacts with importin-alpha, liberating TPX2 from importin-alpha, allowing TPX2 to activate AURKA kinase and stimulate local microtubule nucleation. The sequence is that of Targeting protein for Xklp2 (TPX2) from Homo sapiens (Human).